Reading from the N-terminus, the 1006-residue chain is MSNKEKGVNVQVLLRCRPFSNDELRNNAPQVVTCNDYQREVAVSQNIAGKHIDRIFTFDKVFGPSAQQRDLYDQAIVPIVNEVLEGFNCTIFAYGQTGTGKTYTMEGECKRSKSGPNGELPQEAGVIPRAVKQVFDTLESQNAEYSVKVTFLELYNEEITDLLAPEDLKVALEDRQKKQLPLMEDGKGGVLVRGLEEEIVTSANEIFTLLERGSAKRRTAETLLNKQSSRSHSLFSITIHIKEATPEGEELIKCGKLNLVDLAGSENISRSGAREGRAREAGEINKSLLTLGRVINALVEHLGHIPYRDSKLTRLLRDSLGGRTKTCIIATVSPAVHCLEETLSTLDYAHRAKNIKNKPEVNQKMMKSTLIKDLYGEIERLKAEVYAAREKNGVYIPKERYYQEENERKAMADQIEQMGVSIENHQKQFEELQSRHDSQVQQCSDLTCKLDVTQKQLNQTSKLLAYTEEQLRQSQYTLKERDFIISEQKKAENALAHQACVLRADLEKSIQENASLFQKIAREDKLSTDNRSLVNNFQAELAKQLGSLSSTLATSVCRQTEHLQCVEKFCHNFLDSHDKAVLDLKRKINSSMALYISHFEAMQNVVRLHKATSNATLEEVSTLASSNSISTKEFLDAEAVEANSMFDELQSTLSTHQGEMAHFARELRQRFNDSTEHLTNISAIIQRFFDKLLDESKRLEKHATTVDEIQTNSIAEFEKAYEEQSKSDAEKLIADVTSLVSNHMRRQKELVGARLVDLRETVSGNRTFLDGHVSSMEGITTDAKRKWQDFYMQAEGETKENADFSAAKHCRMESLMQKCVSTAETALKRWQSTHELVNDMGNQHVLTMHSVVRNICDNNEQHVTDFDSTRESAEEDVKRNSEDIIKSIDSLSGEERGSISGVLDTTSAHSETLDVLKKDHCMQSTSIEQIALETFQQKYMDYEPTGATPIRSEPDVPSKVTIESLRAMPMEVLLEEFRENNSFESFQVKEVKPSLIPRSPFSQINN.

Residues 9–355 (NVQVLLRCRP…LDYAHRAKNI (347 aa)) enclose the Kinesin motor domain. Residue 95 to 102 (GQTGTGKT) participates in ATP binding. The stretch at 371–522 (IKDLYGEIER…NASLFQKIAR (152 aa)) forms a coiled coil.

Belongs to the TRAFAC class myosin-kinesin ATPase superfamily. Kinesin family. KIN-5/BimC subfamily.

Its subcellular location is the cytoplasm. The protein resides in the cytoskeleton. The protein localises to the spindle. In terms of biological role, responsible for microtubule translocation. May be important for the organization of phragmoplast-specific arrays of microtubules. Plays an essential role in stabilizing the mitotic spindle. Required during mitotic cytokinesis. The polypeptide is Kinesin-like protein KIN-5C (Nicotiana tabacum (Common tobacco)).